Here is a 148-residue protein sequence, read N- to C-terminus: Transcriptional regulator MraZ (148 aa).

SpoVT-AbrB domains lie at 5 to 53 (ETAI…AEKE) and 82 to 125 (SAVL…SEQA).

This sequence belongs to the MraZ family. In terms of assembly, forms oligomers.

It localises to the cytoplasm. It is found in the nucleoid. This chain is Transcriptional regulator MraZ, found in Xanthomonas oryzae pv. oryzae (strain MAFF 311018).